A 130-amino-acid polypeptide reads, in one-letter code: uncharacterized protein (130 aa).

The Cytoplasmic segment spans residues 1–58 (MREQLKLFTREIVDFTFLILSGFDYYQTLLISSNSSKKRPKDSSLLSEKKKKKKKKKK). Residues 34–57 (NSSKKRPKDSSLLSEKKKKKKKKK) are disordered. A helical transmembrane segment spans residues 59–79 (DVLSYLSYLKDLPFVPFLFWQ). The Extracellular portion of the chain corresponds to 80-94 (PGYSQREKNPRQHSL). A helical membrane pass occupies residues 95-115 (FIMTITKPGMISMADMNYVVS). At 116–130 (KNRSLNRPAERGGNR) the chain is on the cytoplasmic side.

The protein localises to the membrane. This is an uncharacterized protein from Saccharomyces cerevisiae (strain ATCC 204508 / S288c) (Baker's yeast).